The following is a 304-amino-acid chain: Negative regulator of the PHO system (304 aa).

Residues 7-297 enclose the Protein kinase domain; sequence FKQLEKVGNG…AKDALNHPWF (291 aa). ATP-binding positions include 13 to 21 and lysine 36; that span reads VGNGTYATV. The active-site Proton acceptor is the aspartate 133.

This sequence belongs to the protein kinase superfamily. CMGC Ser/Thr protein kinase family. CDC2/CDKX subfamily. In terms of assembly, interacts with a number of cyclins.

The catalysed reaction is L-seryl-[protein] + ATP = O-phospho-L-seryl-[protein] + ADP + H(+). It catalyses the reaction L-threonyl-[protein] + ATP = O-phospho-L-threonyl-[protein] + ADP + H(+). Its function is as follows. When phosphate concentrations are high it phosphorylates the PHO4 transcription factor thus establishing repression. In Kluyveromyces lactis (strain ATCC 8585 / CBS 2359 / DSM 70799 / NBRC 1267 / NRRL Y-1140 / WM37) (Yeast), this protein is Negative regulator of the PHO system (PHO85).